The primary structure comprises 287 residues: Protoheme IX farnesyltransferase (287 aa).

Helical transmembrane passes span 19 to 39, 100 to 120, 134 to 154, 162 to 182, 212 to 232, 233 to 253, and 267 to 287; these read LMVAGATFFGAMLAVPHVTIT, MVLCLAGGLTSLLVGIGIVAV, FALLVGAAAGAMPPVVGWLAV, MLVVVYTLYLLWQIPHFWLHA, VWFHAYAVAVLMVPAFPLLEW, VGMRIMVTLCGIALLFAAMLA, and VLCAVMVVLLIDRLAIPVSLF.

Belongs to the UbiA prenyltransferase family. Protoheme IX farnesyltransferase subfamily.

The protein resides in the cell inner membrane. The enzyme catalyses heme b + (2E,6E)-farnesyl diphosphate + H2O = Fe(II)-heme o + diphosphate. It participates in porphyrin-containing compound metabolism; heme O biosynthesis; heme O from protoheme: step 1/1. Converts heme B (protoheme IX) to heme O by substitution of the vinyl group on carbon 2 of heme B porphyrin ring with a hydroxyethyl farnesyl side group. The polypeptide is Protoheme IX farnesyltransferase (Nitratidesulfovibrio vulgaris (strain ATCC 29579 / DSM 644 / CCUG 34227 / NCIMB 8303 / VKM B-1760 / Hildenborough) (Desulfovibrio vulgaris)).